The chain runs to 348 residues: Trace amine-associated receptor 9 (348 aa).

Over 1-33 (MVNNFSQAEAVELCYKNVNESCIKTPYSPGPRS) the chain is Extracellular. N-linked (GlcNAc...) asparagine glycans are attached at residues Asn4 and Asn19. Cystine bridges form between Cys22/Cys186 and Cys105/Cys190. Residues 34–58 (ILYAVLGFGAVLAAFGNLLVMIAIL) form a helical membrane-spanning segment. Topologically, residues 59-68 (HFKQLHTPTN) are cytoplasmic. A helical membrane pass occupies residues 69 to 90 (FLIASLACADFLVGVTVMPFST). Residues 91-105 (VRSVESCWYFGDSYC) lie on the Extracellular side of the membrane. Residues 106–128 (KFHTCFDTSFCFASLFHLCCISV) form a helical membrane-spanning segment. Residues Asp112 and Thr113 each coordinate spermidine. At 129–148 (DRYIAVTDPLTYPTKFTVSV) the chain is on the cytoplasmic side. A helical membrane pass occupies residues 149–170 (SGICIVLSWFFSVTYSFSIFYT). Residues 171 to 196 (GANEEGIEELVVALTCVGGCQAPLNQ) are Extracellular-facing. Positions 174-187 (EEGIEELVVALTCV) are extracellular Loop 2 (ECL2). Residues 197 to 218 (NWVLLCFLLFFIPNVAMVFIYS) form a helical membrane-spanning segment. Residues 219–256 (KIFLVAKHQARKIESTASQAQSSSESYKERVAKRERKA) are Cytoplasmic-facing. A helical membrane pass occupies residues 257 to 280 (AKTLGIAMAAFLVSWLPYLVDAVI). Over 281-293 (DAYMNFITPPYVY) the chain is Extracellular. The helical transmembrane segment at 294 to 314 (EILVWCVYYNSAMNPLIYAFF) threads the bilayer. The Cytoplasmic portion of the chain corresponds to 315-348 (YQWFGKAIKLIVSGKVLRTDSSTTNLFSEEVETD).

Belongs to the G-protein coupled receptor 1 family.

The protein resides in the cell membrane. In terms of biological role, olfactory receptor specific for trace amines, such as N,N-dimethylcyclohexylamine (DMCHA) and beta-phenylethylamine (beta-PEA). In contrast to mouse and rat orthologs, not activated by triethylamine, cadaverine (CAD) or spermidine. Trace amine compounds are enriched in animal body fluids and act on trace amine-associated receptors (TAARs) to elicit both intraspecific and interspecific innate behaviors. Trace amine-binding causes a conformation change that triggers signaling via G(s)-class of G alpha proteins (GNAL or GNAS). In mature olfactory sensory neurons, TAAR9 is coupled with GNAL/G(olf)G alpha protein and mediates activation of adenylate cyclase activity to activate cAMP signaling and eventually transmit odorant signals to achieve membrane depolarization. In immature olfactory sensory neurons, TAAR9 is coupled with GNAS/G(s) G alpha proteins. The sequence is that of Trace amine-associated receptor 9 from Homo sapiens (Human).